The following is a 291-amino-acid chain: N-acetylmannosamine kinase (291 aa).

ATP-binding positions include 5 to 12 (AIDIGGTK) and 132 to 139 (GVGGGVVS). His-156, Cys-166, Cys-168, and Cys-173 together coordinate Zn(2+).

Belongs to the ROK (NagC/XylR) family. NanK subfamily. In terms of assembly, homodimer.

The catalysed reaction is an N-acyl-D-mannosamine + ATP = an N-acyl-D-mannosamine 6-phosphate + ADP + H(+). Its pathway is amino-sugar metabolism; N-acetylneuraminate degradation; D-fructose 6-phosphate from N-acetylneuraminate: step 2/5. Catalyzes the phosphorylation of N-acetylmannosamine (ManNAc) to ManNAc-6-P. The chain is N-acetylmannosamine kinase (nanK1) from Escherichia coli O6:H1 (strain CFT073 / ATCC 700928 / UPEC).